The following is an 83-amino-acid chain: Exodeoxyribonuclease 7 small subunit (83 aa).

It belongs to the XseB family. In terms of assembly, heterooligomer composed of large and small subunits.

The protein localises to the cytoplasm. It carries out the reaction Exonucleolytic cleavage in either 5'- to 3'- or 3'- to 5'-direction to yield nucleoside 5'-phosphates.. Functionally, bidirectionally degrades single-stranded DNA into large acid-insoluble oligonucleotides, which are then degraded further into small acid-soluble oligonucleotides. This is Exodeoxyribonuclease 7 small subunit from Brucella melitensis biotype 1 (strain ATCC 23456 / CCUG 17765 / NCTC 10094 / 16M).